A 325-amino-acid chain; its full sequence is MKNFSLWCDFIENSFLDNEFLNLLSHGINGATSNPAIFKNAILNSPIYKDKILKLKEKKTKDIYEELAISDIQKAADKLAPLFYQKNDGFISIEIDPRLHDNTTLSLGEAKRLYSAIGKENIMIKIPATKASYEVMYELMKNGISVNATLIFSLEQSQKCFEALNAGLVEFRKNNIALKEQNTRTPQAVISIFVSRFDRLLNPKAKEQNRIGILNANLAYNNIYSKNEPNIRALFASTGVKGDDLPKDYYIKELLFENSVNTAPLDAIEAFKGKMHFKKPLMNFEIYTELNQIISQSEREKACNDLLSDGLEQFCIAFEDILKAL.

Residue Lys125 is the Schiff-base intermediate with substrate of the active site.

Belongs to the transaldolase family. Type 2 subfamily.

It localises to the cytoplasm. The enzyme catalyses D-sedoheptulose 7-phosphate + D-glyceraldehyde 3-phosphate = D-erythrose 4-phosphate + beta-D-fructose 6-phosphate. Its pathway is carbohydrate degradation; pentose phosphate pathway; D-glyceraldehyde 3-phosphate and beta-D-fructose 6-phosphate from D-ribose 5-phosphate and D-xylulose 5-phosphate (non-oxidative stage): step 2/3. In terms of biological role, transaldolase is important for the balance of metabolites in the pentose-phosphate pathway. The protein is Transaldolase (tal) of Campylobacter jejuni subsp. jejuni serotype O:2 (strain ATCC 700819 / NCTC 11168).